We begin with the raw amino-acid sequence, 427 residues long: Isocitrate lyase (427 aa).

Residue S89–W91 coordinates substrate. Residue D150 coordinates Mg(2+). The active-site Proton acceptor is C188. Residues G189 to H190, R225, N310 to S314, and T344 contribute to the substrate site.

This sequence belongs to the isocitrate lyase/PEP mutase superfamily. Isocitrate lyase family. As to quaternary structure, homotetramer. Requires Mg(2+) as cofactor.

It carries out the reaction D-threo-isocitrate = glyoxylate + succinate. Its pathway is carbohydrate metabolism; glyoxylate cycle; (S)-malate from isocitrate: step 1/2. In terms of biological role, involved in the metabolic adaptation in response to environmental changes. Catalyzes the reversible formation of succinate and glyoxylate from isocitrate, a key step of the glyoxylate cycle, which operates as an anaplerotic route for replenishing the tricarboxylic acid cycle during growth on fatty acid substrates. The chain is Isocitrate lyase (aceA) from Halalkalibacterium halodurans (strain ATCC BAA-125 / DSM 18197 / FERM 7344 / JCM 9153 / C-125) (Bacillus halodurans).